Reading from the N-terminus, the 1303-residue chain is Alpha,alpha-trehalose-phosphate synthase [UDP-forming] 2 (1303 aa).

Disordered stretches follow at residues 1–48 (MTVV…NNTT) and 205–251 (LQRR…FRGK). The segment covering 212–221 (SSRGGSLRGS) has biased composition (low complexity).

It in the N-terminal section; belongs to the glycosyltransferase 20 family. The protein in the C-terminal section; belongs to the gob-1 trehalose phosphatase family.

It carries out the reaction D-glucose 6-phosphate + UDP-alpha-D-glucose = alpha,alpha-trehalose 6-phosphate + UDP + H(+). Catalyzes the production of trehalose from glucose-6-phosphate and UDP-alpha-D-glucose in a 2 step process. The chain is Alpha,alpha-trehalose-phosphate synthase [UDP-forming] 2 (tps-2) from Aphelenchoides avenae (Mycophagous nematode worm).